A 330-amino-acid polypeptide reads, in one-letter code: Flotillin-like protein FloA (330 aa).

2 consecutive transmembrane segments (helical) span residues 6–26 and 28–48; these read LLLF…FTFV and VMLW…TLVG.

Belongs to the flotillin-like FloA family. In terms of assembly, homooligomerizes.

The protein resides in the cell membrane. The protein localises to the membrane raft. Functionally, found in functional membrane microdomains (FMM) that may be equivalent to eukaryotic membrane rafts. FMMs are highly dynamic and increase in number as cells age. Flotillins are thought to be important factors in membrane fluidity. The protein is Flotillin-like protein FloA of Bacillus pumilus (strain SAFR-032).